Consider the following 260-residue polypeptide: Tryptophan synthase alpha chain (260 aa).

Catalysis depends on proton acceptor residues glutamate 52 and aspartate 63.

This sequence belongs to the TrpA family. Tetramer of two alpha and two beta chains.

The catalysed reaction is (1S,2R)-1-C-(indol-3-yl)glycerol 3-phosphate + L-serine = D-glyceraldehyde 3-phosphate + L-tryptophan + H2O. The protein operates within amino-acid biosynthesis; L-tryptophan biosynthesis; L-tryptophan from chorismate: step 5/5. Its function is as follows. The alpha subunit is responsible for the aldol cleavage of indoleglycerol phosphate to indole and glyceraldehyde 3-phosphate. This is Tryptophan synthase alpha chain from Streptococcus mutans serotype c (strain ATCC 700610 / UA159).